A 601-amino-acid chain; its full sequence is Sestrin homolog (601 aa).

The segment covering 1–11 (MISMGMTSKGQ) has biased composition (polar residues). The tract at residues 1-58 (MISMGMTSKGQNVDGAPAGNSSSEWIISSSSSPFQANKRYSLDPPFGSDYSPPASPQN) is disordered. Residue Asn20 is glycosylated (N-linked (GlcNAc...) asparagine). The segment covering 21–32 (SSSEWIISSSSS) has biased composition (low complexity). N-linked (GlcNAc...) asparagine glycans are attached at residues Asn322 and Asn330. Residues 355–425 (RRSQQQDDDD…DSSSSTLSQS (71 aa)) form a disordered region. The span at 368 to 379 (LHDRQQDFHNAG) shows a compositional bias: basic and acidic residues. The segment covering 380–425 (DDSQSSNNNTTTTTTTTTTTTTTTNTNTTSNSAGGGDSSSSTLSQS) has biased composition (low complexity). Asn387, Asn388, Asn406, Asn438, and Asn499 each carry an N-linked (GlcNAc...) asparagine glycan.

Belongs to the sestrin family.

It localises to the nucleus. It is found in the cytoplasm. May function as a negative feedback regulator of TOR function. This chain is Sestrin homolog, found in Dictyostelium discoideum (Social amoeba).